The primary structure comprises 412 residues: Phospholipase A1-IIdelta (412 aa).

An N-acetylalanine modification is found at A2. The Acyl-ester intermediate role is filled by S238. Active-site charge relay system residues include S238, D297, and H336.

Belongs to the AB hydrolase superfamily. Lipase family. In terms of tissue distribution, expressed in leaves, stems, flowers and siliques, and, at low levels, in seeds and roots (at protein level).

The protein resides in the cytoplasm. Functionally, acylhydrolase that catalyzes the hydrolysis of phosphatidylcholine (PC) at the sn-1 position. High activity toward PC, medium activity toward monogalactosyldiacylglycerol (MGDG) and low activity toward triacylglycerol (TAG). Confers sensitivity to UV-B radiation probably by deesterifying membrane phospholipids. The sequence is that of Phospholipase A1-IIdelta from Arabidopsis thaliana (Mouse-ear cress).